The primary structure comprises 524 residues: Peptide chain release factor 3 (524 aa).

One can recognise a tr-type G domain in the interval Ala11–Gly278. Residues Ser20–Thr27, Asp88–His92, and Asn142–Asp145 contribute to the GTP site.

The protein belongs to the TRAFAC class translation factor GTPase superfamily. Classic translation factor GTPase family. PrfC subfamily.

It localises to the cytoplasm. In terms of biological role, increases the formation of ribosomal termination complexes and stimulates activities of RF-1 and RF-2. It binds guanine nucleotides and has strong preference for UGA stop codons. It may interact directly with the ribosome. The stimulation of RF-1 and RF-2 is significantly reduced by GTP and GDP, but not by GMP. This Lacticaseibacillus casei (strain BL23) (Lactobacillus casei) protein is Peptide chain release factor 3.